Here is a 101-residue protein sequence, read N- to C-terminus: Trp operon repressor homolog (101 aa).

Residues 59 to 82 (QREIQQNLNTSAATITRGSNMIKT) mediate DNA binding.

The protein belongs to the TrpR family. Homodimer.

It localises to the cytoplasm. Its function is as follows. This protein is an aporepressor. When complexed with L-tryptophan it binds the operator region of the trp operon and prevents the initiation of transcription. The chain is Trp operon repressor homolog from Haemophilus influenzae (strain 86-028NP).